The primary structure comprises 287 residues: Phosphatidylserine decarboxylase proenzyme (287 aa).

Active-site charge relay system; for autoendoproteolytic cleavage activity residues include D90, H147, and S253. S253 (schiff-base intermediate with substrate; via pyruvic acid; for decarboxylase activity) is an active-site residue. S253 is subject to Pyruvic acid (Ser); by autocatalysis.

The protein belongs to the phosphatidylserine decarboxylase family. PSD-B subfamily. Prokaryotic type I sub-subfamily. Heterodimer of a large membrane-associated beta subunit and a small pyruvoyl-containing alpha subunit. Pyruvate serves as cofactor. In terms of processing, is synthesized initially as an inactive proenzyme. Formation of the active enzyme involves a self-maturation process in which the active site pyruvoyl group is generated from an internal serine residue via an autocatalytic post-translational modification. Two non-identical subunits are generated from the proenzyme in this reaction, and the pyruvate is formed at the N-terminus of the alpha chain, which is derived from the carboxyl end of the proenzyme. The autoendoproteolytic cleavage occurs by a canonical serine protease mechanism, in which the side chain hydroxyl group of the serine supplies its oxygen atom to form the C-terminus of the beta chain, while the remainder of the serine residue undergoes an oxidative deamination to produce ammonia and the pyruvoyl prosthetic group on the alpha chain. During this reaction, the Ser that is part of the protease active site of the proenzyme becomes the pyruvoyl prosthetic group, which constitutes an essential element of the active site of the mature decarboxylase.

The protein localises to the cell membrane. The enzyme catalyses a 1,2-diacyl-sn-glycero-3-phospho-L-serine + H(+) = a 1,2-diacyl-sn-glycero-3-phosphoethanolamine + CO2. Its pathway is phospholipid metabolism; phosphatidylethanolamine biosynthesis; phosphatidylethanolamine from CDP-diacylglycerol: step 2/2. Catalyzes the formation of phosphatidylethanolamine (PtdEtn) from phosphatidylserine (PtdSer). This Aliivibrio fischeri (strain MJ11) (Vibrio fischeri) protein is Phosphatidylserine decarboxylase proenzyme.